We begin with the raw amino-acid sequence, 178 residues long: Large ribosomal subunit protein uL6 (178 aa).

The protein belongs to the universal ribosomal protein uL6 family. In terms of assembly, part of the 50S ribosomal subunit.

In terms of biological role, this protein binds to the 23S rRNA, and is important in its secondary structure. It is located near the subunit interface in the base of the L7/L12 stalk, and near the tRNA binding site of the peptidyltransferase center. The chain is Large ribosomal subunit protein uL6 from Streptococcus gordonii (strain Challis / ATCC 35105 / BCRC 15272 / CH1 / DL1 / V288).